The chain runs to 484 residues: Glutamate--tRNA ligase (484 aa).

Residues 9–19 (PSPTGNLHIGT) carry the 'HIGH' region motif. Zn(2+) contacts are provided by Cys98, Cys100, His125, and His127. The short motif at 250 to 254 (KLSKR) is the 'KMSKS' region element. Lys253 lines the ATP pocket.

Belongs to the class-I aminoacyl-tRNA synthetase family. Glutamate--tRNA ligase type 1 subfamily. In terms of assembly, monomer. The cofactor is Zn(2+).

The protein localises to the cytoplasm. The enzyme catalyses tRNA(Glu) + L-glutamate + ATP = L-glutamyl-tRNA(Glu) + AMP + diphosphate. Functionally, catalyzes the attachment of glutamate to tRNA(Glu) in a two-step reaction: glutamate is first activated by ATP to form Glu-AMP and then transferred to the acceptor end of tRNA(Glu). This chain is Glutamate--tRNA ligase, found in Crocosphaera subtropica (strain ATCC 51142 / BH68) (Cyanothece sp. (strain ATCC 51142)).